Reading from the N-terminus, the 61-residue chain is Short neurotoxin 1 (61 aa).

4 disulfide bridges follow: cysteine 3/cysteine 23, cysteine 17/cysteine 40, cysteine 42/cysteine 53, and cysteine 54/cysteine 59.

The protein belongs to the three-finger toxin family. Short-chain subfamily. Type I alpha-neurotoxin sub-subfamily. Expressed by the venom gland.

It localises to the secreted. Its function is as follows. Binds to muscle nicotinic acetylcholine receptor (nAChR) and inhibit acetylcholine from binding to the receptor, thereby impairing neuromuscular transmission. Produces peripheral paralysis by blocking neuromuscular transmission at the postsynaptic site. Binds to the muscular nicotinic acetylcholine receptor. In Naja annulifera (Banded Egyptian cobra), this protein is Short neurotoxin 1.